The primary structure comprises 48 residues: Putative ATP synthase protein 8-like protein (48 aa).

Residues 17–37 (GFLVILLTLLLLSYAFLSMIL) traverse the membrane as a helical segment.

The protein belongs to the ATPase protein 8 family.

It is found in the membrane. This Eremothecium gossypii (strain ATCC 10895 / CBS 109.51 / FGSC 9923 / NRRL Y-1056) (Yeast) protein is Putative ATP synthase protein 8-like protein.